We begin with the raw amino-acid sequence, 301 residues long: MKLDYNSREIFFGNEALIVADMSKGINGKPEFTNHKIVAGLVSVGSMEDQAETNSYPADDVPDHGVKKGATLLQGEMVFIQTDQALKEDILGQQRTENGLGWSPTGNWKTKCVQYLIKGRKRDKVTGEFVDGYRVVVYPNLTPTAEATKESETDSVDGVDPIQWTLAVQATESDIYLNGGKKVPAIEYEIWGEQAKDFVKKMESGLFIMQPDTVLAGAITLVAPVIPNVTTATKGNNDGTIVVPDTLKDSKGGTVKVTSVIKDAHGKVATNGQLAPGVYIVTFSADGYEDVTAGVSVTDHS.

It belongs to the skunalikevirus tail tube protein family. As to quaternary structure, homohexamer. The tube is composed of 31 hexameric rings.

Its subcellular location is the virion. Its function is as follows. Forms the cylindrical rigid tail tube. The polypeptide is Tail tube protein (Lactococcus phage F4-1 (Lactococcus lactis bacteriophage F4-1)).